The following is a 309-amino-acid chain: Lipoyl synthase (309 aa).

Residues cysteine 43, cysteine 48, cysteine 54, cysteine 70, cysteine 74, cysteine 77, and serine 283 each coordinate [4Fe-4S] cluster. Positions 56–272 (AVRKTATFMI…KEIAMQKGFS (217 aa)) constitute a Radical SAM core domain.

It belongs to the radical SAM superfamily. Lipoyl synthase family. [4Fe-4S] cluster is required as a cofactor.

The protein localises to the cytoplasm. The catalysed reaction is [[Fe-S] cluster scaffold protein carrying a second [4Fe-4S](2+) cluster] + N(6)-octanoyl-L-lysyl-[protein] + 2 oxidized [2Fe-2S]-[ferredoxin] + 2 S-adenosyl-L-methionine + 4 H(+) = [[Fe-S] cluster scaffold protein] + N(6)-[(R)-dihydrolipoyl]-L-lysyl-[protein] + 4 Fe(3+) + 2 hydrogen sulfide + 2 5'-deoxyadenosine + 2 L-methionine + 2 reduced [2Fe-2S]-[ferredoxin]. It functions in the pathway protein modification; protein lipoylation via endogenous pathway; protein N(6)-(lipoyl)lysine from octanoyl-[acyl-carrier-protein]. In terms of biological role, catalyzes the radical-mediated insertion of two sulfur atoms into the C-6 and C-8 positions of the octanoyl moiety bound to the lipoyl domains of lipoate-dependent enzymes, thereby converting the octanoylated domains into lipoylated derivatives. The chain is Lipoyl synthase from Shouchella clausii (strain KSM-K16) (Alkalihalobacillus clausii).